The chain runs to 326 residues: Glutaminase 2 (326 aa).

Residues serine 73, asparagine 125, glutamate 169, asparagine 176, tyrosine 200, tyrosine 252, and valine 270 each coordinate substrate.

It belongs to the glutaminase family. In terms of assembly, homotetramer.

It catalyses the reaction L-glutamine + H2O = L-glutamate + NH4(+). This Bacillus anthracis protein is Glutaminase 2.